The sequence spans 357 residues: S-adenosylmethionine:tRNA ribosyltransferase-isomerase (357 aa).

Belongs to the QueA family. In terms of assembly, monomer.

The protein resides in the cytoplasm. It catalyses the reaction 7-aminomethyl-7-carbaguanosine(34) in tRNA + S-adenosyl-L-methionine = epoxyqueuosine(34) in tRNA + adenine + L-methionine + 2 H(+). It participates in tRNA modification; tRNA-queuosine biosynthesis. Functionally, transfers and isomerizes the ribose moiety from AdoMet to the 7-aminomethyl group of 7-deazaguanine (preQ1-tRNA) to give epoxyqueuosine (oQ-tRNA). This Buchnera aphidicola subsp. Acyrthosiphon pisum (strain APS) (Acyrthosiphon pisum symbiotic bacterium) protein is S-adenosylmethionine:tRNA ribosyltransferase-isomerase.